The chain runs to 545 residues: MNPSTAQARVVVDELVRGGVRDVVLCPGSRNAPLAFALQAADAAGRLRLHMRIDERTAGFLAIGLAISAGAPVPVVMTSGTAVANLGPAVLEANYARVPLIVLSANRPYEMLGTGANQTVEQLGLFGSQVRATISLGLAEADGAGAGSYDQQNSVWRSAVCRVLAAARGTRSGNAGPVHFDIPLREPLVPDLAEGEAEPAGRAGGAPWTATQYATLDVPLEIDLTPDTVVVSGHGAGLRPELAHLPTVAEPTAPMHGPALHPLALPLLTPRQAIITGRPTLHRQVSRLLADPAVTVYALTTGPRWPDVSGNVVGTGTRAVTSGGPRPEWLAHCRELDEKARQVVRAELAGHPKPTGLHVAAVVMDALREGDQLLLGASNPVRDAALVATPRPGVRVLSNRGVAGIDGTVSTAVGAALAHPGRTIALIGDLTFLHDAAGLLIGRGEPRPADLTIVVANDDGGGIFELLEQGDPQYAGVFERVFGTPHGMDLAALCAAYRIPHRQVDPAELAAELAGDAHGLRVLEVITERSSLRELHATVRAKIAP.

It belongs to the TPP enzyme family. MenD subfamily. In terms of assembly, homodimer. Mg(2+) serves as cofactor. Requires Mn(2+) as cofactor. Thiamine diphosphate is required as a cofactor.

It carries out the reaction isochorismate + 2-oxoglutarate + H(+) = 5-enolpyruvoyl-6-hydroxy-2-succinyl-cyclohex-3-ene-1-carboxylate + CO2. The protein operates within quinol/quinone metabolism; 1,4-dihydroxy-2-naphthoate biosynthesis; 1,4-dihydroxy-2-naphthoate from chorismate: step 2/7. Its pathway is quinol/quinone metabolism; menaquinone biosynthesis. Catalyzes the thiamine diphosphate-dependent decarboxylation of 2-oxoglutarate and the subsequent addition of the resulting succinic semialdehyde-thiamine pyrophosphate anion to isochorismate to yield 2-succinyl-5-enolpyruvyl-6-hydroxy-3-cyclohexene-1-carboxylate (SEPHCHC). The protein is 2-succinyl-5-enolpyruvyl-6-hydroxy-3-cyclohexene-1-carboxylate synthase of Nocardia farcinica (strain IFM 10152).